The chain runs to 210 residues: Large ribosomal subunit protein bL25 (210 aa).

The interval 190 to 210 (LKSEGAEGGEAEAGQAEEGEE) is disordered. The span at 196 to 210 (EGGEAEAGQAEEGEE) shows a compositional bias: acidic residues.

It belongs to the bacterial ribosomal protein bL25 family. CTC subfamily. As to quaternary structure, part of the 50S ribosomal subunit; part of the 5S rRNA/L5/L18/L25 subcomplex. Contacts the 5S rRNA. Binds to the 5S rRNA independently of L5 and L18.

In terms of biological role, this is one of the proteins that binds to the 5S RNA in the ribosome where it forms part of the central protuberance. The sequence is that of Large ribosomal subunit protein bL25 from Chelativorans sp. (strain BNC1).